The following is a 406-amino-acid chain: Tryptophan synthase beta chain (406 aa).

Lys97 is modified (N6-(pyridoxal phosphate)lysine).

It belongs to the TrpB family. Tetramer of two alpha and two beta chains. It depends on pyridoxal 5'-phosphate as a cofactor.

The enzyme catalyses (1S,2R)-1-C-(indol-3-yl)glycerol 3-phosphate + L-serine = D-glyceraldehyde 3-phosphate + L-tryptophan + H2O. It functions in the pathway amino-acid biosynthesis; L-tryptophan biosynthesis; L-tryptophan from chorismate: step 5/5. In terms of biological role, the beta subunit is responsible for the synthesis of L-tryptophan from indole and L-serine. The protein is Tryptophan synthase beta chain of Lacticaseibacillus paracasei (strain ATCC 334 / BCRC 17002 / CCUG 31169 / CIP 107868 / KCTC 3260 / NRRL B-441) (Lactobacillus paracasei).